The primary structure comprises 261 residues: MSRIAETFAYLRAAGRTALMPYLMTGYPERDSALELAPALEAAGADLFELGVPFSDPLADGATIQRASERALANGIRLEHCIETVAGLRKRGVRAPIVPMGYYNPFLQYGLERLARDMADAGADGLIIPDLPPEEAHECHAACRAHGLDLIFFVAPTTPDERIDRIAALASGFIYCVALTGVTGARRELWSGLPAFLERVRRRTSLPLVVGFGISSAAHVREAGRYAAGAIVASALINVIEQAPPGEYVARAVDFVRSLRG.

Active-site proton acceptor residues include Glu49 and Asp60.

It belongs to the TrpA family. Tetramer of two alpha and two beta chains.

It catalyses the reaction (1S,2R)-1-C-(indol-3-yl)glycerol 3-phosphate + L-serine = D-glyceraldehyde 3-phosphate + L-tryptophan + H2O. It functions in the pathway amino-acid biosynthesis; L-tryptophan biosynthesis; L-tryptophan from chorismate: step 5/5. The alpha subunit is responsible for the aldol cleavage of indoleglycerol phosphate to indole and glyceraldehyde 3-phosphate. This chain is Tryptophan synthase alpha chain, found in Roseiflexus sp. (strain RS-1).